Reading from the N-terminus, the 414-residue chain is 2,3-diketo-5-methylthiopentyl-1-phosphate enolase (414 aa).

Residue Lys99 is the Proton acceptor of the active site. Substrate is bound by residues Lys148, 174 to 177, His265, Gly338, and 360 to 361; these read KDDE and GG. Mg(2+) is bound by residues Lys174, Asp176, and Glu177. Lys174 is subject to N6-carboxylysine.

This sequence belongs to the RuBisCO large chain family. Type IV subfamily. As to quaternary structure, homodimer. Mg(2+) serves as cofactor.

It carries out the reaction 5-methylsulfanyl-2,3-dioxopentyl phosphate = 2-hydroxy-5-methylsulfanyl-3-oxopent-1-enyl phosphate. Its pathway is amino-acid biosynthesis; L-methionine biosynthesis via salvage pathway; L-methionine from S-methyl-5-thio-alpha-D-ribose 1-phosphate: step 3/6. Functionally, catalyzes the enolization of 2,3-diketo-5-methylthiopentyl-1-phosphate (DK-MTP-1-P) into 2-hydroxy-3-keto-5-methylthiopentenyl-1-phosphate (HK-MTPenyl-1-P). This is 2,3-diketo-5-methylthiopentyl-1-phosphate enolase from Bacillus cereus (strain AH187).